A 216-amino-acid chain; its full sequence is Large ribosomal subunit protein uL24m (216 aa).

The N-terminal 9 residues, 1–9 (MRLSALLAL), are a transit peptide targeting the mitochondrion. S24 is modified (phosphoserine). Residues 56 to 89 (LFCGDRVEILEGKDAGKQGKVVQVIRQRNWVVVE) form the KOW domain.

Belongs to the universal ribosomal protein uL24 family. As to quaternary structure, component of the mitochondrial ribosome large subunit (39S) which comprises a 16S rRNA and about 50 distinct proteins.

It localises to the mitochondrion. This chain is Large ribosomal subunit protein uL24m (MRPL24), found in Bos taurus (Bovine).